The sequence spans 176 residues: NAD(P)H-quinone oxidoreductase subunit 6, chloroplastic (176 aa).

Helical transmembrane passes span 10–30 (ILVL…VLLT), 33–53 (IYSA…YFLL), 60–80 (VAQL…AVMF), 95–115 (IGDG…MTTI), and 152–172 (FYLP…GAIT).

It belongs to the complex I subunit 6 family. In terms of assembly, NDH is composed of at least 16 different subunits, 5 of which are encoded in the nucleus.

It localises to the plastid. Its subcellular location is the chloroplast thylakoid membrane. The catalysed reaction is a plastoquinone + NADH + (n+1) H(+)(in) = a plastoquinol + NAD(+) + n H(+)(out). The enzyme catalyses a plastoquinone + NADPH + (n+1) H(+)(in) = a plastoquinol + NADP(+) + n H(+)(out). In terms of biological role, NDH shuttles electrons from NAD(P)H:plastoquinone, via FMN and iron-sulfur (Fe-S) centers, to quinones in the photosynthetic chain and possibly in a chloroplast respiratory chain. The immediate electron acceptor for the enzyme in this species is believed to be plastoquinone. Couples the redox reaction to proton translocation, and thus conserves the redox energy in a proton gradient. The chain is NAD(P)H-quinone oxidoreductase subunit 6, chloroplastic (ndhG) from Brachypodium distachyon (Purple false brome).